Consider the following 258-residue polypeptide: Type III pantothenate kinase 1 (258 aa).

Residue 6-13 participates in ATP binding; sequence DMGNSHIH. A substrate-binding site is contributed by 107 to 110; it reads GADR. Asp-109 (proton acceptor) is an active-site residue. Asp-130 contacts K(+). Position 133 (Thr-133) interacts with ATP. Position 185 (Thr-185) interacts with substrate.

The protein belongs to the type III pantothenate kinase family. As to quaternary structure, homodimer. The cofactor is NH4(+). Requires K(+) as cofactor.

Its subcellular location is the cytoplasm. The enzyme catalyses (R)-pantothenate + ATP = (R)-4'-phosphopantothenate + ADP + H(+). It participates in cofactor biosynthesis; coenzyme A biosynthesis; CoA from (R)-pantothenate: step 1/5. Catalyzes the phosphorylation of pantothenate (Pan), the first step in CoA biosynthesis. The sequence is that of Type III pantothenate kinase 1 from Francisella tularensis subsp. tularensis (strain FSC 198).